The primary structure comprises 631 residues: Phosphomethylpyrimidine synthase (631 aa).

Substrate-binding positions include Asn239, Met268, Tyr297, His333, 353 to 355, 394 to 397, and Glu433; these read SRG and DGLR. His437 is a binding site for Zn(2+). Residue Tyr460 participates in substrate binding. His501 serves as a coordination point for Zn(2+). 3 residues coordinate [4Fe-4S] cluster: Cys581, Cys584, and Cys589.

This sequence belongs to the ThiC family. As to quaternary structure, homodimer. The cofactor is [4Fe-4S] cluster.

It catalyses the reaction 5-amino-1-(5-phospho-beta-D-ribosyl)imidazole + S-adenosyl-L-methionine = 4-amino-2-methyl-5-(phosphooxymethyl)pyrimidine + CO + 5'-deoxyadenosine + formate + L-methionine + 3 H(+). Its pathway is cofactor biosynthesis; thiamine diphosphate biosynthesis. In terms of biological role, catalyzes the synthesis of the hydroxymethylpyrimidine phosphate (HMP-P) moiety of thiamine from aminoimidazole ribotide (AIR) in a radical S-adenosyl-L-methionine (SAM)-dependent reaction. This chain is Phosphomethylpyrimidine synthase, found in Ralstonia nicotianae (strain ATCC BAA-1114 / GMI1000) (Ralstonia solanacearum).